Consider the following 132-residue polypeptide: uncharacterized protein (132 aa).

4 helical membrane-spanning segments follow: residues 15–37 (FPEY…LLLY), 49–71 (AFIP…LRLF), 81–103 (VILT…LALV), and 110–129 (LAAT…MAFV).

It is found in the cell membrane. This is an uncharacterized protein from Archaeoglobus fulgidus (strain ATCC 49558 / DSM 4304 / JCM 9628 / NBRC 100126 / VC-16).